The following is an 806-amino-acid chain: Lon protease 1 (806 aa).

In terms of domain architecture, Lon N-terminal spans 31-235 (VPLIAVPSHP…KVLELIYEEL (205 aa)). 389-396 (GPPGVGKT) lines the ATP pocket. One can recognise a Lon proteolytic domain in the interval 626-806 (AMYSGMVMGL…NMREVIKLLF (181 aa)). Residues Ser714 and Lys757 contribute to the active site.

Belongs to the peptidase S16 family. Homohexamer. Organized in a ring with a central cavity.

It is found in the cytoplasm. It catalyses the reaction Hydrolysis of proteins in presence of ATP.. ATP-dependent serine protease that mediates the selective degradation of mutant and abnormal proteins as well as certain short-lived regulatory proteins. Required for cellular homeostasis and for survival from DNA damage and developmental changes induced by stress. Degrades polypeptides processively to yield small peptide fragments that are 5 to 10 amino acids long. Binds to DNA in a double-stranded, site-specific manner. The chain is Lon protease 1 from Borreliella burgdorferi (strain ATCC 35210 / DSM 4680 / CIP 102532 / B31) (Borrelia burgdorferi).